A 153-amino-acid polypeptide reads, in one-letter code: Deoxyuridine 5'-triphosphate nucleotidohydrolase (153 aa).

Substrate-binding positions include 71–73 (RSG), N84, 88–90 (TID), and K98.

The protein belongs to the dUTPase family. Mg(2+) is required as a cofactor.

The enzyme catalyses dUTP + H2O = dUMP + diphosphate + H(+). It participates in pyrimidine metabolism; dUMP biosynthesis; dUMP from dCTP (dUTP route): step 2/2. Its function is as follows. This enzyme is involved in nucleotide metabolism: it produces dUMP, the immediate precursor of thymidine nucleotides and it decreases the intracellular concentration of dUTP so that uracil cannot be incorporated into DNA. This Wolbachia sp. subsp. Drosophila simulans (strain wRi) protein is Deoxyuridine 5'-triphosphate nucleotidohydrolase.